Consider the following 1637-residue polypeptide: Serine/threonine-protein kinase Genghis Khan (1637 aa).

The 270-residue stretch at 100–369 (FDILKIIGRG…IQDFMDHPWF (270 aa)) folds into the Protein kinase domain. Residues 106–114 (IGRGAFGEV) and Lys-129 contribute to the ATP site. The active-site Proton acceptor is Asp-224. One can recognise an AGC-kinase C-terminal domain in the interval 370–440 (VGIDWKNIRQ…SLTSSSTLDS (71 aa)). Coiled-coil stretches lie at residues 473–587 (VDSV…EDAV), 643–688 (SEKL…LKYT), and 839–881 (DELS…DLQK). The interval 538-575 (RNQKQKLSRQVRDKEEELDGAMQKNDSLRNELRKSDKT) is disordered. Positions 563–575 (DSLRNELRKSDKT) are enriched in basic and acidic residues. Residue Thr-895 is modified to Phosphothreonine. Residues 952–971 (NNKDHSSMKEASVSDLSREE) form a disordered region. The segment at 989-1039 (IHQFLVRTFSSPTKCNHCTSLMVGLTRQGVVCEICGFACHTICCQKVPTTC) adopts a Phorbol-ester/DAG-type zinc-finger fold. The 119-residue stretch at 1059–1177 (GTAYEGYVKV…WVIALGELHR (119 aa)) folds into the PH domain. A CNH domain is found at 1203–1489 (IRNALCSVII…LPLNNLGNVV (287 aa)). The region spanning 1546–1559 (ISAPTNFNHISHMG) is the CRIB domain. Residue Ser-1584 is modified to Phosphoserine. The interval 1611–1637 (DYGNDNIISRTPSPMASSFMDGLSNND) is disordered. Residues 1616 to 1626 (NIISRTPSPMA) are compositionally biased toward polar residues.

The protein belongs to the protein kinase superfamily. AGC Ser/Thr protein kinase family. DMPK subfamily. Interacts tightly with GTP-bound but not GDP-bound Cdc42.

The enzyme catalyses L-seryl-[protein] + ATP = O-phospho-L-seryl-[protein] + ADP + H(+). It catalyses the reaction L-threonyl-[protein] + ATP = O-phospho-L-threonyl-[protein] + ADP + H(+). Acts as a downstream effector for the regulation of actin polymerization by Cdc42. In Drosophila melanogaster (Fruit fly), this protein is Serine/threonine-protein kinase Genghis Khan (gek).